A 186-amino-acid chain; its full sequence is UPF0303 protein ZMO1353 (186 aa).

This sequence belongs to the UPF0303 family.

The chain is UPF0303 protein ZMO1353 from Zymomonas mobilis subsp. mobilis (strain ATCC 31821 / ZM4 / CP4).